A 1889-amino-acid chain; its full sequence is Bromodomain adjacent to zinc finger domain protein 2A (1889 aa).

3 disordered regions span residues M1–S59, F384–A433, and T479–A526. Polar residues predominate over residues T35–S59. The required for TTF1 binding stretch occupies residues E332 to A726. The segment covering P423–A433 has biased composition (low complexity). 2 stretches are compositionally biased toward polar residues: residues T479–P489 and Q498–S509. Phosphothreonine is present on T499. S501 bears the Phosphoserine mark. The MBD domain maps to I538–P609. Residue T540 is modified to Phosphothreonine. The residue at position 605 (S605) is a Phosphoserine. The disordered stretch occupies residues Q638 to T791. DNA-binding regions (a.T hook) lie at residues T641 to A653 and K662 to P674. Over residues R648–K660 the composition is skewed to basic and acidic residues. Positions V661–K670 are enriched in basic residues. Residue K672 is modified to N6-acetyllysine; by KAT8. The segment covering N678–K701 has biased composition (basic and acidic residues). Residues K686–K813 are a coiled coil. The segment covering M702 to V713 has biased composition (basic residues). Residues G716–A726 are compositionally biased toward polar residues. Basic and acidic residues-rich tracts occupy residues K731–K740 and A748–T791. An N6-acetyllysine modification is found at K790. The DDT domain maps to S839–L904. K857 participates in a covalent cross-link: Glycyl lysine isopeptide (Lys-Gly) (interchain with G-Cter in SUMO2). The interval E1039–K1063 is disordered. A Phosphoserine modification is found at S1042. The span at S1042–N1052 shows a compositional bias: acidic residues. Glycyl lysine isopeptide (Lys-Gly) (interchain with G-Cter in SUMO2) cross-links involve residues K1141 and K1163. 2 disordered regions span residues L1147 to Q1247 and L1269 to P1397. Residue S1174 is modified to Phosphoserine. A DNA-binding region (a.T hook 3) is located at residues A1176–G1188. Polar residues-rich tracts occupy residues L1190–S1231, L1269–S1278, and D1331–M1346. Phosphoserine occurs at positions 1374, 1377, and 1383. A DNA-binding region (a.T hook 4) is located at residues P1390–K1402. At S1545 the chain carries Phosphoserine. Glycyl lysine isopeptide (Lys-Gly) (interchain with G-Cter in SUMO2) cross-links involve residues K1662 and K1695. The PHD-type zinc finger occupies K1662 to Q1712. A disordered region spans residues Q1720 to S1778. A Phosphoserine modification is found at S1733. A Phosphothreonine modification is found at T1738. A compositionally biased stretch (basic and acidic residues) spans G1742 to D1754. Phosphoserine occurs at positions 1755 and 1767. Over residues P1769 to S1778 the composition is skewed to basic residues. The region spanning R1777–F1881 is the Bromo domain.

Belongs to the WAL family. As to quaternary structure, component of the NoRC-1 ISWI chromatin remodeling complex at least composed of SMARCA1 and BAZ2A/TIP5, which regulates the spacing of histone octamers on the DNA template to facilitate access to DNA. Within the NoRC-1 ISWI chromatin remodeling complex interacts with SMARCA1; the interaction is direct. Component of the NoRC-5 ISWI chromatin remodeling complex (also called the NoRC nucleolar-remodeling complex), at least composed of SMARCA5/SNF2H and BAZ2A/TIP5, which regulates the spacing of histone octamers on the DNA template to facilitate access to DNA. Within the NoRC-5 ISWI chromatin remodeling complexes interacts with SMARCA5/SNF2H; the interaction is direct. Interacts with TTF1; the interaction is required for recruitment of the NoRC-5 ISWI chromatin remodeling complex to rDNA. Interacts with HDAC1. Interacts with SIN3A. Interacts with DNMT1 and DNM3B. Interacts with BEND3 and USP21. Post-translationally, ubiquitinated. Deubiquitinated by USP21 leading to its stabilization. Acetylation at Lys-672 by KAT8/MOF promotes its dissociation from pRNA, affecting heterochromatin formation, nucleosome positioning and rDNA silencing. Deacetylation by SIRT1 in late S phase enhances pRNA-binding, allowing de novo DNA methylation and heterochromatin formation. Acetylation is high during S phase and declines to background levels in late S phase when the silent copies of rRNA genes are replicated.

The protein resides in the nucleus. It is found in the nucleolus. In terms of biological role, regulatory subunit of the ATP-dependent NoRC-1 and NoRC-5 ISWI chromatin remodeling complexes, which form ordered nucleosome arrays on chromatin and facilitate access to DNA during DNA-templated processes such as DNA replication, transcription, and repair. Both complexes regulate the spacing of nucleosomes along the chromatin and have the ability to slide mononucleosomes to the center of a DNA template. Directly stimulates the ATPase activity of SMARCA5 in the NoRC-5 ISWI chromatin remodeling complex. The NoRC-1 ISWI chromatin remodeling complex has a lower ATP hydrolysis rate than the NoRC-5 ISWI chromatin remodeling complex. Within the NoRC-5 ISWI chromatin remodeling complex, mediates silencing of a fraction of rDNA by recruiting histone-modifying enzymes and DNA methyltransferases, leading to heterochromatin formation and transcriptional silencing. In the complex, it plays a central role by being recruited to rDNA and by targeting chromatin modifying enzymes such as HDAC1, leading to repress RNA polymerase I transcription. Recruited to rDNA via its interaction with TTF1 and its ability to recognize and bind histone H4 acetylated on 'Lys-16' (H4K16ac), leading to deacetylation of H4K5ac, H4K8ac, H4K12ac but not H4K16ac. Specifically binds pRNAs, 150-250 nucleotide RNAs that are complementary in sequence to the rDNA promoter; pRNA-binding is required for heterochromatin formation and rDNA silencing. This Mus musculus (Mouse) protein is Bromodomain adjacent to zinc finger domain protein 2A (Baz2a).